Reading from the N-terminus, the 407-residue chain is Arginine deiminase (407 aa).

C397 (amidino-cysteine intermediate) is an active-site residue.

It belongs to the arginine deiminase family.

It is found in the cytoplasm. It catalyses the reaction L-arginine + H2O = L-citrulline + NH4(+). Its pathway is amino-acid degradation; L-arginine degradation via ADI pathway; carbamoyl phosphate from L-arginine: step 1/2. The sequence is that of Arginine deiminase from Pediococcus pentosaceus (strain ATCC 25745 / CCUG 21536 / LMG 10740 / 183-1w).